The primary structure comprises 192 residues: MVLLAFLCAAALAALARGTIPPPEEAARMARFVLHNCDWGALATLSAQEGLRGRPFANIFSISDGAPGPGGGSGVPYLYLTDMEISVQDLEVNSNASLTVSLAQTPYCKKHRYDPQNPLCAHIIFCGSIVKVNDSEAALAKKALFTRHPEMESWPKDHNWFYAKFNITNIWVLDYFGGLKIVTPEEYYNVKP.

Positions 1–18 (MVLLAFLCAAALAALARG) are cleaved as a signal peptide. N95, N133, and N166 each carry an N-linked (GlcNAc...) asparagine glycan.

Belongs to the CREG family.

It localises to the secreted. Functionally, may contribute to the transcriptional control of cell growth and differentiation. This Gallus gallus (Chicken) protein is Protein CREG1 (CREG1).